Here is a 325-residue protein sequence, read N- to C-terminus: 5-dehydro-2-deoxygluconokinase (325 aa).

Belongs to the carbohydrate kinase PfkB family.

The catalysed reaction is 5-dehydro-2-deoxy-D-gluconate + ATP = 6-phospho-5-dehydro-2-deoxy-D-gluconate + ADP + H(+). Its pathway is polyol metabolism; myo-inositol degradation into acetyl-CoA; acetyl-CoA from myo-inositol: step 5/7. Catalyzes the phosphorylation of 5-dehydro-2-deoxy-D-gluconate (2-deoxy-5-keto-D-gluconate or DKG) to 6-phospho-5-dehydro-2-deoxy-D-gluconate (DKGP). The sequence is that of 5-dehydro-2-deoxygluconokinase from Listeria monocytogenes serotype 4a (strain HCC23).